The chain runs to 122 residues: MWRNSQKWKNRASRRPQRKGEALIDKLWIFRGLDRGRMTKKTLLMHELIGLKVKVVKSSHPGLIGIEGYVIDETKNTLTILGTKVWAIPKIVAEFEFEVGDKKIRIKGEELVGRPEMRLKKR.

It belongs to the eukaryotic/archaeal RNase P protein component 1 family. In terms of assembly, consists of a catalytic RNA component and at least 4-5 protein subunits.

Its subcellular location is the cytoplasm. It carries out the reaction Endonucleolytic cleavage of RNA, removing 5'-extranucleotides from tRNA precursor.. In terms of biological role, part of ribonuclease P, a protein complex that generates mature tRNA molecules by cleaving their 5'-ends. This chain is Ribonuclease P protein component 1, found in Thermococcus sibiricus (strain DSM 12597 / MM 739).